Reading from the N-terminus, the 472-residue chain is Glycosyl hydrolase family 109 protein (472 aa).

The tat-type signal signal peptide spans Met-1–Ala-35. Residues Asn-68 to Arg-69, Asp-90, Trp-139 to His-142, His-145, Glu-159 to Leu-160, and Asn-188 each bind NAD(+). Substrate-binding positions include Tyr-217, Arg-236, Tyr-248 to His-251, and Tyr-330. Tyr-248 contacts NAD(+).

It belongs to the Gfo/Idh/MocA family. Glycosyl hydrolase 109 subfamily. Requires NAD(+) as cofactor. Predicted to be exported by the Tat system. The position of the signal peptide cleavage has not been experimentally proven.

Its function is as follows. Glycosidase. Has no alpha-N-acetylgalactosaminidase activity. This Streptomyces coelicolor (strain ATCC BAA-471 / A3(2) / M145) protein is Glycosyl hydrolase family 109 protein.